The sequence spans 93 residues: Phosphoribosyl-ATP pyrophosphatase (93 aa).

This sequence belongs to the PRA-PH family.

The protein localises to the cytoplasm. The catalysed reaction is 1-(5-phospho-beta-D-ribosyl)-ATP + H2O = 1-(5-phospho-beta-D-ribosyl)-5'-AMP + diphosphate + H(+). It functions in the pathway amino-acid biosynthesis; L-histidine biosynthesis; L-histidine from 5-phospho-alpha-D-ribose 1-diphosphate: step 2/9. This chain is Phosphoribosyl-ATP pyrophosphatase, found in Mycolicibacterium vanbaalenii (strain DSM 7251 / JCM 13017 / BCRC 16820 / KCTC 9966 / NRRL B-24157 / PYR-1) (Mycobacterium vanbaalenii).